The primary structure comprises 358 residues: MAAALVRRFCRGSSFPVSGHGYRMLSTVENVSESGKSMNLYSAINQALHIALETDPRSYVFGEDVGFGGVFRCTTGLAERFGKSRVFNTPLCEQGIVGFGIGLAAMGNRVIAEIQFADYIFPAFDQIVNEAAKFRYRSGNQFNCGGLTIRAPYGAVGHGGHYHSQSPEAFFCHVPGIKVVIPRSPREAKGLLLSSIRDPNPVVFFEPKWLYRQAVEDVPEDDYMIPLSEAEVMREGSDITLVGWGAQLTIMEQACLDAENEGISCELIDLKTLIPWDKEIVETSVRKTGRLLISHEAPVTGGFGAEIAATIVERCFLRLEAPVSRVCGLDTPFPLVFEPFYMPTKNKILDAIRSTVNY.

The transit peptide at 1–16 directs the protein to the mitochondrion; the sequence is MAAALVRRFCRGSSFP. A thiamine diphosphate-binding site is contributed by Tyr119. The K(+) site is built by Gly145, Leu147, Thr148, Asp198, and Asn200.

As to quaternary structure, heterotetramer of alpha and beta chains. Requires thiamine diphosphate as cofactor. As to expression, expressed in the non-photosynthetic organs such as siliques, flowers and roots.

Its subcellular location is the mitochondrion matrix. It catalyses the reaction N(6)-[(R)-lipoyl]-L-lysyl-[protein] + 3-methyl-2-oxobutanoate + H(+) = N(6)-[(R)-S(8)-2-methylpropanoyldihydrolipoyl]-L-lysyl-[protein] + CO2. The branched-chain alpha-keto dehydrogenase complex catalyzes the overall conversion of alpha-keto acids to acyl-CoA and CO(2). It contains multiple copies of three enzymatic components: branched-chain alpha-keto acid decarboxylase (E1), lipoamide acyltransferase (E2) and lipoamide dehydrogenase (E3). Required during sugar starvation and acts under the control of a sugar-sensing mechanism involving Ser/Thr kinases and phosphatases. The polypeptide is 2-oxoisovalerate dehydrogenase subunit beta 2, mitochondrial (DIN4) (Arabidopsis thaliana (Mouse-ear cress)).